Here is a 373-residue protein sequence, read N- to C-terminus: Erythronate-4-phosphate dehydrogenase (373 aa).

Substrate contacts are provided by S45 and T66. NAD(+) is bound by residues D146 and T173. The active site involves R206. NAD(+) is bound at residue D230. E235 is a catalytic residue. Catalysis depends on H252, which acts as the Proton donor. NAD(+) is bound at residue G255. Residue Y256 coordinates substrate.

Belongs to the D-isomer specific 2-hydroxyacid dehydrogenase family. PdxB subfamily. In terms of assembly, homodimer.

Its subcellular location is the cytoplasm. It carries out the reaction 4-phospho-D-erythronate + NAD(+) = (R)-3-hydroxy-2-oxo-4-phosphooxybutanoate + NADH + H(+). Its pathway is cofactor biosynthesis; pyridoxine 5'-phosphate biosynthesis; pyridoxine 5'-phosphate from D-erythrose 4-phosphate: step 2/5. Catalyzes the oxidation of erythronate-4-phosphate to 3-hydroxy-2-oxo-4-phosphonooxybutanoate. The sequence is that of Erythronate-4-phosphate dehydrogenase from Saccharophagus degradans (strain 2-40 / ATCC 43961 / DSM 17024).